A 666-amino-acid polypeptide reads, in one-letter code: Phosphoenolpyruvate carboxykinase (ATP) (666 aa).

Disordered regions lie at residues 1 to 68 and 91 to 132; these read MATP…AHSP and ASLT…HPAA. Residues 48–58 are compositionally biased toward polar residues; sequence APTTPNRSAPT. Positions 109–123 are enriched in low complexity; it reads KGEAAAQGAPSTPRA. 364-371 contacts ATP; that stretch reads GLSGTGKT.

Belongs to the phosphoenolpyruvate carboxykinase (ATP) family.

Its subcellular location is the cytoplasm. The enzyme catalyses oxaloacetate + ATP = phosphoenolpyruvate + ADP + CO2. It participates in carbohydrate biosynthesis; gluconeogenesis. The polypeptide is Phosphoenolpyruvate carboxykinase (ATP) (Zea mays (Maize)).